Here is a 758-residue protein sequence, read N- to C-terminus: General transcription and DNA repair factor IIH helicase subunit XPD (758 aa).

The region spanning Asp-7–Tyr-285 is the Helicase ATP-binding domain. Met-42–Thr-49 lines the ATP pocket. Cys-116, Cys-134, Cys-155, and Cys-190 together coordinate [4Fe-4S] cluster. The DEAH box motif lies at Asp-234–Asn-238.

Belongs to the helicase family. RAD3/XPD subfamily. Component of the 7-subunit TFIIH core complex composed of XPB, XPD, TFB1/GTF2H1, GTF2H2/P44, TFB4/GTF2H3, TFB2/GTF2H4 and TFB5/GTF2H5, which is active in NER. The core complex associates with the 3-subunit CDK-activating kinase (CAK) module composed of CYCH1/cyclin H1, CDKD and MAT1/At4g30820 to form the 10-subunit holoenzyme (holo-TFIIH) active in transcription. Interacts with GTF2H2/p44. The cofactor is [4Fe-4S] cluster. Expressed at low levels in all tissues.

Its subcellular location is the nucleus. The enzyme catalyses Couples ATP hydrolysis with the unwinding of duplex DNA at the replication fork by translocating in the 5'-3' direction. This creates two antiparallel DNA single strands (ssDNA). The leading ssDNA polymer is the template for DNA polymerase III holoenzyme which synthesizes a continuous strand.. It carries out the reaction ATP + H2O = ADP + phosphate + H(+). Functionally, ATP-dependent 5'-3' DNA helicase, component of the general transcription and DNA repair factor IIH (TFIIH) core complex, which is involved in general and transcription-coupled nucleotide excision repair (NER) of damaged DNA and, when complexed to CDK-activating kinase (CAK), involved in transcription by RNA polymerase II. In NER, TFIIH acts by opening DNA around the lesion to allow the excision of the damaged oligonucleotide and its replacement by a new DNA fragment. The ATP-dependent helicase activity of XPD is required for DNA opening. In transcription, TFIIH has an essential role in transcription initiation. When the pre-initiation complex (PIC) has been established, TFIIH is required for promoter opening and promoter escape. Phosphorylation of the C-terminal tail (CTD) of the largest subunit of RNA polymerase II by the kinase module CAK controls the initiation of transcription. XPD acts by forming a bridge between CAK and the core-TFIIH complex. Essential during plant growth. May negatively regulate a common response program mediated by UV damage and heat stress, that leads to tissue death and reduced chloroplast function. The sequence is that of General transcription and DNA repair factor IIH helicase subunit XPD from Arabidopsis thaliana (Mouse-ear cress).